Consider the following 101-residue polypeptide: Putative antitoxin HigA2 (101 aa).

In terms of domain architecture, HTH cro/C1-type spans Leu35 to Thr90. Residues Gln46 to Asn65 constitute a DNA-binding region (H-T-H motif).

Its function is as follows. Putative antitoxin component of a type II toxin-antitoxin (TA) system. Its cognate toxin would be HigB2. This chain is Putative antitoxin HigA2, found in Mycobacterium tuberculosis (strain ATCC 25618 / H37Rv).